Consider the following 352-residue polypeptide: Nicotinate-nucleotide--dimethylbenzimidazole phosphoribosyltransferase (352 aa).

The active-site Proton acceptor is Glu-318.

The protein belongs to the CobT family.

It carries out the reaction 5,6-dimethylbenzimidazole + nicotinate beta-D-ribonucleotide = alpha-ribazole 5'-phosphate + nicotinate + H(+). The protein operates within nucleoside biosynthesis; alpha-ribazole biosynthesis; alpha-ribazole from 5,6-dimethylbenzimidazole: step 1/2. Its function is as follows. Catalyzes the synthesis of alpha-ribazole-5'-phosphate from nicotinate mononucleotide (NAMN) and 5,6-dimethylbenzimidazole (DMB). The protein is Nicotinate-nucleotide--dimethylbenzimidazole phosphoribosyltransferase of Dehalococcoides mccartyi (strain CBDB1).